The sequence spans 219 residues: Large ribosomal subunit protein uL3 (219 aa).

A disordered region spans residues Phe124–Ile154.

It belongs to the universal ribosomal protein uL3 family. As to quaternary structure, part of the 50S ribosomal subunit. Forms a cluster with proteins L14 and L19.

Functionally, one of the primary rRNA binding proteins, it binds directly near the 3'-end of the 23S rRNA, where it nucleates assembly of the 50S subunit. This Phytoplasma mali (strain AT) protein is Large ribosomal subunit protein uL3.